The primary structure comprises 391 residues: NAD(P)H-quinone oxidoreductase subunit H, chloroplastic (391 aa).

This sequence belongs to the complex I 49 kDa subunit family. In terms of assembly, NDH is composed of at least 16 different subunits, 5 of which are encoded in the nucleus.

Its subcellular location is the plastid. The protein localises to the chloroplast thylakoid membrane. It catalyses the reaction a plastoquinone + NADH + (n+1) H(+)(in) = a plastoquinol + NAD(+) + n H(+)(out). It carries out the reaction a plastoquinone + NADPH + (n+1) H(+)(in) = a plastoquinol + NADP(+) + n H(+)(out). In terms of biological role, NDH shuttles electrons from NAD(P)H:plastoquinone, via FMN and iron-sulfur (Fe-S) centers, to quinones in the photosynthetic chain and possibly in a chloroplast respiratory chain. The immediate electron acceptor for the enzyme in this species is believed to be plastoquinone. Couples the redox reaction to proton translocation, and thus conserves the redox energy in a proton gradient. In Chaetosphaeridium globosum (Charophycean green alga), this protein is NAD(P)H-quinone oxidoreductase subunit H, chloroplastic.